Here is a 141-residue protein sequence, read N- to C-terminus: Nucleoside diphosphate kinase (141 aa).

ATP is bound by residues Lys11, Phe59, Arg87, Thr93, Arg104, and Asn114. Residue His117 is the Pros-phosphohistidine intermediate of the active site.

Belongs to the NDK family. As to quaternary structure, homotetramer. Mg(2+) serves as cofactor.

The protein resides in the cytoplasm. The enzyme catalyses a 2'-deoxyribonucleoside 5'-diphosphate + ATP = a 2'-deoxyribonucleoside 5'-triphosphate + ADP. The catalysed reaction is a ribonucleoside 5'-diphosphate + ATP = a ribonucleoside 5'-triphosphate + ADP. Major role in the synthesis of nucleoside triphosphates other than ATP. The ATP gamma phosphate is transferred to the NDP beta phosphate via a ping-pong mechanism, using a phosphorylated active-site intermediate. The protein is Nucleoside diphosphate kinase of Polaromonas naphthalenivorans (strain CJ2).